The following is a 101-amino-acid chain: Apolipoprotein C-II (101 aa).

An N-terminal signal peptide occupies residues 1–22 (MGARHLLALLLVLLVLGFEVQG). Residues 66-74 (TMDEKIRDM) are lipid binding. The tract at residues 78–101 (STAAVSTYVGIFTDQLLSLLKGDE) is lipoprotein lipase cofactor.

It belongs to the apolipoprotein C2 family. In terms of processing, proapolipoprotein C-II is synthesized as a sialic acid containing glycoprotein which is subsequently desialylated prior to its proteolytic processing. Proapolipoprotein C-II, the major form found in plasma undergoes proteolytic cleavage of its N-terminal hexapeptide to generate apolipoprotein C-II, which occurs as the minor form in plasma.

It localises to the secreted. In terms of biological role, component of chylomicrons, very low-density lipoproteins (VLDL), low-density lipoproteins (LDL), and high-density lipoproteins (HDL) in plasma. Plays an important role in lipoprotein metabolism as an activator of lipoprotein lipase. Both proapolipoprotein C-II and apolipoprotein C-II can activate lipoprotein lipase. This Tapirus indicus (Asiatic tapir) protein is Apolipoprotein C-II (APOC2).